The sequence spans 541 residues: Myrosinase 1 (541 aa).

The first 19 residues, 1–19, serve as a signal peptide directing secretion; it reads MKLLMLAFVFLLALATCKG. 3 cysteine pairs are disulfide-bonded: Cys-24-Cys-449, Cys-32-Cys-445, and Cys-224-Cys-232. N-linked (GlcNAc...) asparagine glycosylation is present at Asn-33. Gln-57 contacts a beta-D-glucoside. The N-linked (GlcNAc...) asparagine glycan is linked to Asn-108. His-159 provides a ligand contact to a beta-D-glucoside. Asn-175 carries N-linked (GlcNAc...) asparagine glycosylation. Residue 204-205 participates in a beta-D-glucoside binding; the sequence is NQ. N-linked (GlcNAc...) asparagine glycosylation occurs at Asn-236. Position 348 (Tyr-348) interacts with a beta-D-glucoside. N-linked (GlcNAc...) asparagine glycosylation is found at Asn-356 and Asn-379. Residues Glu-420, Trp-468, 475 to 476, and Phe-484 contribute to the a beta-D-glucoside site; that span reads EF. The Nucleophile role is filled by Glu-420. N-linked (GlcNAc...) asparagine glycans are attached at residues Asn-493 and Asn-512.

It belongs to the glycosyl hydrolase 1 family. Homodimer. In terms of tissue distribution, expressed in guard cells, phloem-associated cells and myrosin cells.

It localises to the vacuole. The enzyme catalyses a thioglucoside + H2O = a sugar + a thiol.. The catalysed reaction is Hydrolysis of terminal, non-reducing beta-D-glucosyl residues with release of beta-D-glucose.. In terms of biological role, degradation of glucosinolates (glucose residue linked by a thioglucoside bound to an amino acid derivative) to glucose, sulfate and any of the products: thiocyanates, isothiocyanates, nitriles, epithionitriles or oxazolidine-2-thiones. These toxic degradation products can deter insect herbivores. Seems to function in abscisic acid (ABA) and methyl jasmonate (MeJA) signaling in guard cells. Functionally redundant with TGG2. Hydrolyzes sinigrin and, with lower efficiency, p-nitrophenyl beta-D-glucoside. This is Myrosinase 1 from Arabidopsis thaliana (Mouse-ear cress).